Reading from the N-terminus, the 159-residue chain is MNVTIISVGKIKEKYLSDAIIEYSKRISRYSKLDIIEVADEKTPENPSDVEKSKILEKEAERILKYLKKDSFLITLEILGKELTSEDLAKKINDLSISGKSDITFVIGGSLGLSKNISEISDFKLSFSKMTFPHQLMRVILLEQIYRSFRIISGEPYHK.

S-adenosyl-L-methionine-binding positions include Leu-76, Gly-108, and 127-132 (FSKMTF).

Belongs to the RNA methyltransferase RlmH family.

It localises to the cytoplasm. The enzyme catalyses pseudouridine(1915) in 23S rRNA + S-adenosyl-L-methionine = N(3)-methylpseudouridine(1915) in 23S rRNA + S-adenosyl-L-homocysteine + H(+). Functionally, specifically methylates the pseudouridine at position 1915 (m3Psi1915) in 23S rRNA. The protein is Putative ribosomal RNA large subunit methyltransferase H of Methanococcus maripaludis (strain DSM 14266 / JCM 13030 / NBRC 101832 / S2 / LL).